Here is a 315-residue protein sequence, read N- to C-terminus: tRNA dimethylallyltransferase (315 aa).

10–17 provides a ligand contact to ATP; that stretch reads GPTAVGKT. 12 to 17 lines the substrate pocket; sequence TAVGKT. The tract at residues 35–38 is interaction with substrate tRNA; the sequence is DSMQ.

Belongs to the IPP transferase family. As to quaternary structure, monomer. The cofactor is Mg(2+).

It carries out the reaction adenosine(37) in tRNA + dimethylallyl diphosphate = N(6)-dimethylallyladenosine(37) in tRNA + diphosphate. Functionally, catalyzes the transfer of a dimethylallyl group onto the adenine at position 37 in tRNAs that read codons beginning with uridine, leading to the formation of N6-(dimethylallyl)adenosine (i(6)A). This Geobacillus kaustophilus (strain HTA426) protein is tRNA dimethylallyltransferase.